The primary structure comprises 979 residues: Probable serine/threonine-protein kinase iksA (979 aa).

10 N-linked (GlcNAc...) asparagine glycosylation sites follow: Asn-32, Asn-110, Asn-120, Asn-121, Asn-147, Asn-155, Asn-161, Asn-220, Asn-231, and Asn-243. The tract at residues 207–245 is disordered; the sequence is SKSGVNNNNNNNNNDSTTTNNNNNNNTTPPQQQQQQNSS. Over residues 212-244 the composition is skewed to low complexity; sequence NNNNNNNNNDSTTTNNNNNNNTTPPQQQQQQNS. In terms of domain architecture, Protein kinase spans 261-568; that stretch reads FKEDIKIGSG…ISQILSTHFI (308 aa). ATP contacts are provided by residues 267 to 275 and Lys-293; that span reads IGSGGFGSV. The active-site Proton acceptor is the Asp-397. N-linked (GlcNAc...) asparagine glycans are attached at residues Asn-592, Asn-597, Asn-615, Asn-645, Asn-646, Asn-663, and Asn-699. The span at 593-602 shows a compositional bias: polar residues; it reads TSVHNTTAST. The disordered stretch occupies residues 593 to 666; sequence TSVHNTTAST…LGNNNNNNTN (74 aa). Residues 610–666 are compositionally biased toward low complexity; sequence SISTTNSTTSSSSSTATSSSLSSTTIATTSSSNAINNTTATTTTNSNLGNNNNNNTN. The span at 713-727 shows a compositional bias: acidic residues; that stretch reads NDDIIIDDDDDDDDS. The segment at 713–793 is disordered; sequence NDDIIIDDDD…GNNGIRKALP (81 aa). 2 stretches are compositionally biased toward low complexity: residues 728–737 and 753–773; these read TNNNDTNNTD and NNKKSSYSRSSSIRSPSSSNK. N-linked (GlcNAc...) asparagine glycosylation is found at Asn-731 and Asn-734. A helical membrane pass occupies residues 846–866; it reads FPSPILLYPLLLLSLIPILVV. 2 N-linked (GlcNAc...) asparagine glycosylation sites follow: Asn-870 and Asn-894. A run of 2 helical transmembrane segments spans residues 912–932 and 956–976; these read INTIISIIRFIYYFVISVLLP and FPLLSLFKNLTLLIINLIFIF.

Belongs to the protein kinase superfamily. Ser/Thr protein kinase family.

Its subcellular location is the membrane. The enzyme catalyses L-seryl-[protein] + ATP = O-phospho-L-seryl-[protein] + ADP + H(+). It carries out the reaction L-threonyl-[protein] + ATP = O-phospho-L-threonyl-[protein] + ADP + H(+). In Dictyostelium discoideum (Social amoeba), this protein is Probable serine/threonine-protein kinase iksA (iksA).